The following is a 365-amino-acid chain: Protein Tob1 (365 aa).

A Bipartite nuclear localization signal motif is present at residues 22–39 (RRRVNIFGEELERLLKQK). An important for nuclear localization region spans residues 82 to 92 (VRGNLPQDLSV). Residues 144–160 (DPASSVSSSPSPPFGHS) are compositionally biased toward low complexity. The disordered stretch occupies residues 144–171 (DPASSVSSSPSPPFGHSAAVSPTFMPRS). The interval 161–220 (AAVSPTFMPRSTQPLTFTTATFAATKFGSTKMKNSGRSSKVARTSPISLGLNVNVNDLLK) is required for interaction with CPEB3. Position 204 is a phosphothreonine (Thr-204). A Nuclear export signal motif is present at residues 228–236 (MHSLYGLGL). The segment at 233–287 (GLGLGSQQQPQPQPQQPPSQPPPPPPPPQQQQQHQQQQQQQQQQQQQPQQQTSAL) is disordered. Residues 243–261 (QPQPQQPPSQPPPPPPPPQ) show a composition bias toward pro residues. Low complexity predominate over residues 262-283 (QQQQHQQQQQQQQQQQQQPQQQ).

It belongs to the BTG family. In terms of assembly, interacts with ERBB2. Interacts with CNOT7. Interacts with CPEB3 (via C-terminal RNA-binding region); recruits CNOT7 to CPEB3 to form a ternary complex required for mRNA deadenylation and decay. Interacts with CNOT8. Interacts with CPEB4. Post-translationally, phosphorylated on Ser and Thr residues.

It is found in the cytoplasm. The protein resides in the nucleus. Its function is as follows. Anti-proliferative protein; the function is mediated by association with deadenylase subunits of the CCR4-NOT complex. Mediates CPEB3-accelerated mRNA deadenylation by binding to CPEB3 and recruiting CNOT7 which leads to target mRNA deadenylation and decay. This chain is Protein Tob1 (Tob1), found in Rattus norvegicus (Rat).